Consider the following 61-residue polypeptide: Photosystem II reaction center protein K (61 aa).

A propeptide spanning residues 1–24 (MLNIFCLICICLNSTLYSSSFFFA) is cleaved from the precursor. Residues 32–52 (FFNPIIDVMPIIPVLFFLLAF) form a helical membrane-spanning segment.

The protein belongs to the PsbK family. PSII is composed of 1 copy each of membrane proteins PsbA, PsbB, PsbC, PsbD, PsbE, PsbF, PsbH, PsbI, PsbJ, PsbK, PsbL, PsbM, PsbT, PsbX, PsbY, PsbZ, Psb30/Ycf12, at least 3 peripheral proteins of the oxygen-evolving complex and a large number of cofactors. It forms dimeric complexes.

The protein localises to the plastid. Its subcellular location is the chloroplast thylakoid membrane. Its function is as follows. One of the components of the core complex of photosystem II (PSII). PSII is a light-driven water:plastoquinone oxidoreductase that uses light energy to abstract electrons from H(2)O, generating O(2) and a proton gradient subsequently used for ATP formation. It consists of a core antenna complex that captures photons, and an electron transfer chain that converts photonic excitation into a charge separation. The protein is Photosystem II reaction center protein K of Phalaenopsis aphrodite subsp. formosana (Moth orchid).